Here is a 475-residue protein sequence, read N- to C-terminus: Histidine--tRNA ligase (475 aa).

This sequence belongs to the class-II aminoacyl-tRNA synthetase family. Homodimer.

The protein resides in the cytoplasm. The enzyme catalyses tRNA(His) + L-histidine + ATP = L-histidyl-tRNA(His) + AMP + diphosphate + H(+). In Flavobacterium johnsoniae (strain ATCC 17061 / DSM 2064 / JCM 8514 / BCRC 14874 / CCUG 350202 / NBRC 14942 / NCIMB 11054 / UW101) (Cytophaga johnsonae), this protein is Histidine--tRNA ligase.